The following is a 2280-amino-acid chain: Protein Ycf2 (2280 aa).

1631–1638 serves as a coordination point for ATP; the sequence is GSIGTGRS.

Belongs to the Ycf2 family.

The protein localises to the plastid. Its subcellular location is the chloroplast stroma. In terms of biological role, probable ATPase of unknown function. Its presence in a non-photosynthetic plant (Epifagus virginiana) and experiments in tobacco indicate that it has an essential function which is probably not related to photosynthesis. This chain is Protein Ycf2 (ycf2-A), found in Nicotiana tabacum (Common tobacco).